The following is a 451-amino-acid chain: tRNA modification GTPase MnmE (451 aa).

Positions 37, 95, and 135 each coordinate (6S)-5-formyl-5,6,7,8-tetrahydrofolate. The TrmE-type G domain occupies 232–376 (GLSIVIMGPP…LVEAIADFAG (145 aa)). Position 242 (Asn-242) interacts with K(+). GTP is bound by residues 242-247 (NAGKST), 261-267 (SEIAGTT), and 286-289 (DTAG). Ser-246 serves as a coordination point for Mg(2+). 3 residues coordinate K(+): Ser-261, Ile-263, and Thr-266. Thr-267 is a Mg(2+) binding site. Lys-451 lines the (6S)-5-formyl-5,6,7,8-tetrahydrofolate pocket.

It belongs to the TRAFAC class TrmE-Era-EngA-EngB-Septin-like GTPase superfamily. TrmE GTPase family. In terms of assembly, homodimer. Heterotetramer of two MnmE and two MnmG subunits. It depends on K(+) as a cofactor.

It localises to the cytoplasm. Its function is as follows. Exhibits a very high intrinsic GTPase hydrolysis rate. Involved in the addition of a carboxymethylaminomethyl (cmnm) group at the wobble position (U34) of certain tRNAs, forming tRNA-cmnm(5)s(2)U34. The sequence is that of tRNA modification GTPase MnmE from Beijerinckia indica subsp. indica (strain ATCC 9039 / DSM 1715 / NCIMB 8712).